Consider the following 724-residue polypeptide: Probable zinc transporter MSC2 (724 aa).

Residues 1 to 6 (MNLQEL) lie on the Cytoplasmic side of the membrane. The chain crosses the membrane as a helical span at residues 7-27 (LAKVPLLLSYPTIILSSNLIV). At 28-58 (PSHNDLISRAASTSAAEYADEKLIFFSTDHA) the chain is on the lumenal side. The chain crosses the membrane as a helical span at residues 59–79 (IRLIFLPTFVASSFNLFAHYF). The Cytoplasmic segment spans residues 80-90 (NFINYSSRRKY). The chain crosses the membrane as a helical span at residues 91–111 (YVLFTAIYFLSILTAIFHPIQ). Residues 112–134 (STCITLLIIKLLTTADESSPKIA) lie on the Lumenal side of the membrane. Residues 135 to 155 (LNFKTILKTFVPFITLTLVIL) traverse the membrane as a helical segment. The Cytoplasmic segment spans residues 156–174 (RWDPSFDASSGDVNKISTS). Residues 175–195 (LAAYALLILTLRYASPLILST) form a helical membrane-spanning segment. Over 196–219 (LSSSIGVVSKDTSVAQHSISRNKR) the chain is Lumenal. A helical membrane pass occupies residues 220–240 (FPLILVLPIFSFVLLYLMTIV). At 241–244 (NKTY) the chain is on the cytoplasmic side. Residues 245–265 (NIQLLMVFVFFGCLSIFFLSL) form a helical membrane-spanning segment. Residues 266–298 (KDLFTEDGNQKKGGQEDEYCRMFDIKYMISYLW) lie on the Lumenal side of the membrane. Residues 299 to 319 (LTRFTILLTGIMAIVVHFLSF) traverse the membrane as a helical segment. The Cytoplasmic segment spans residues 320-386 (NEITSSIKTD…KQMALNKDTR (67 aa)). Residues 387–407 (SIFSFLLLNTAFMFVQLLYSF) form a helical membrane-spanning segment. Residues 408-417 (RSKSLGLLSD) are Lumenal-facing. Residues 418-438 (SLHMALDCTSLLLGLIAGVLT) traverse the membrane as a helical segment. Over 439-453 (KKPASDKFPFGLNYL) the chain is Cytoplasmic. A helical membrane pass occupies residues 454-474 (GTLAGFTNGVLLLGIVCGIFV). At 475-491 (EAIERIFNPIHLHATNE) the chain is on the lumenal side. Residues 492-512 (LLVVATLGLLVNLVGLFAFDH) traverse the membrane as a helical segment. Residues 513–528 (GAHDHGGTDNENMKGI) lie on the Cytoplasmic side of the membrane. The helical transmembrane segment at 529–549 (FLHILADTLGSVGVVISTLLI) threads the bilayer. Topologically, residues 550–563 (KLTHWPIFDPIASL) are lumenal. A helical membrane pass occupies residues 564-584 (LIGSLILLSALPLLKSTSANI). The Cytoplasmic segment spans residues 585 to 724 (LLRLDDKKHN…NSLPLQPIAN (140 aa)). Residues 614–653 (TPRFWPTESGSSGHSHAHTHSHAENHSHEHHHDQKNGSQE) form a disordered region. The span at 634–648 (SHAENHSHEHHHDQK) shows a compositional bias: basic and acidic residues.

It belongs to the cation diffusion facilitator (CDF) transporter (TC 2.A.4) family. SLC30A subfamily.

It localises to the endoplasmic reticulum membrane. The protein resides in the nucleus membrane. Its function is as follows. Probably act as a zinc ion transporter moving zinc from the nucleus/endoplasmic reticulum to the cytoplasm. Involved in zinc ion homeostasis and cellular distribution. This Saccharomyces cerevisiae (strain ATCC 204508 / S288c) (Baker's yeast) protein is Probable zinc transporter MSC2 (MSC2).